Reading from the N-terminus, the 64-residue chain is Translation machinery-associated protein 7 homolog (64 aa).

Residues 1-64 (MSGREGGKKK…QGGIKKSGKK (64 aa)) form a disordered region. Residues 27-44 (VAFKQKQKEQQKALDAAK) are compositionally biased toward basic and acidic residues.

Belongs to the TMA7 family.

The protein is Translation machinery-associated protein 7 homolog of Anopheles funestus (African malaria mosquito).